A 308-amino-acid polypeptide reads, in one-letter code: Ornithine carbamoyltransferase (308 aa).

Residues R103 and 130 to 133 (HPAQ) each bind carbamoyl phosphate. Residues N162, D221, and 225 to 226 (SM) each bind L-ornithine. Carbamoyl phosphate contacts are provided by residues 261-262 (CL) and R289.

The protein belongs to the aspartate/ornithine carbamoyltransferase superfamily. OTCase family.

The protein localises to the cytoplasm. The enzyme catalyses carbamoyl phosphate + L-ornithine = L-citrulline + phosphate + H(+). It participates in amino-acid biosynthesis; L-arginine biosynthesis; L-arginine from L-ornithine and carbamoyl phosphate: step 1/3. Reversibly catalyzes the transfer of the carbamoyl group from carbamoyl phosphate (CP) to the N(epsilon) atom of ornithine (ORN) to produce L-citrulline. In Deinococcus radiodurans (strain ATCC 13939 / DSM 20539 / JCM 16871 / CCUG 27074 / LMG 4051 / NBRC 15346 / NCIMB 9279 / VKM B-1422 / R1), this protein is Ornithine carbamoyltransferase.